Here is a 156-residue protein sequence, read N- to C-terminus: Cytochrome c-type biogenesis protein CcmE (156 aa).

The Cytoplasmic portion of the chain corresponds to methionine 1–arginine 7. The helical; Signal-anchor for type II membrane protein transmembrane segment at leucine 8 to alanine 28 threads the bilayer. Residues phenylalanine 29–arginine 156 are Periplasmic-facing. Heme-binding residues include histidine 123 and tyrosine 127.

It belongs to the CcmE/CycJ family.

The protein localises to the cell inner membrane. Its function is as follows. Heme chaperone required for the biogenesis of c-type cytochromes. Transiently binds heme delivered by CcmC and transfers the heme to apo-cytochromes in a process facilitated by CcmF and CcmH. This chain is Cytochrome c-type biogenesis protein CcmE, found in Ralstonia pickettii (strain 12J).